The primary structure comprises 367 residues: DNA replication and repair protein RecF (367 aa).

Residue 30–37 coordinates ATP; that stretch reads GSNGSGKT.

It belongs to the RecF family.

It localises to the cytoplasm. Functionally, the RecF protein is involved in DNA metabolism; it is required for DNA replication and normal SOS inducibility. RecF binds preferentially to single-stranded, linear DNA. It also seems to bind ATP. This Pseudomonas putida (strain ATCC 700007 / DSM 6899 / JCM 31910 / BCRC 17059 / LMG 24140 / F1) protein is DNA replication and repair protein RecF.